Reading from the N-terminus, the 599-residue chain is Sulfite reductase [NADPH] flavoprotein alpha-component (599 aa).

The Flavodoxin-like domain occupies 64–202 (ITIISASQTG…AASEWRARVV (139 aa)). FMN is bound by residues 70 to 75 (SQTGNA), 117 to 120 (STQG), and 153 to 162 (LGDSSYEFFC). One can recognise an FAD-binding FR-type domain in the interval 234 to 448 (DAPLVASLSV…IEHNDNFRLP (215 aa)). Residues threonine 322, alanine 356, 386–389 (RLYS), 404–406 (TVG), tyrosine 410, and 419–422 (GGAS) each bind FAD. Residues 519 to 520 (SR), 525 to 529 (KVYVQ), and aspartate 561 contribute to the NADP(+) site. Tyrosine 599 is a binding site for FAD.

The protein belongs to the NADPH-dependent sulphite reductase flavoprotein subunit CysJ family. In the N-terminal section; belongs to the flavodoxin family. This sequence in the C-terminal section; belongs to the flavoprotein pyridine nucleotide cytochrome reductase family. In terms of assembly, alpha(8)-beta(8). The alpha component is a flavoprotein, the beta component is a hemoprotein. It depends on FAD as a cofactor. The cofactor is FMN.

It carries out the reaction hydrogen sulfide + 3 NADP(+) + 3 H2O = sulfite + 3 NADPH + 4 H(+). The protein operates within sulfur metabolism; hydrogen sulfide biosynthesis; hydrogen sulfide from sulfite (NADPH route): step 1/1. Functionally, component of the sulfite reductase complex that catalyzes the 6-electron reduction of sulfite to sulfide. This is one of several activities required for the biosynthesis of L-cysteine from sulfate. The flavoprotein component catalyzes the electron flow from NADPH -&gt; FAD -&gt; FMN to the hemoprotein component. This chain is Sulfite reductase [NADPH] flavoprotein alpha-component, found in Escherichia coli O157:H7.